The sequence spans 443 residues: Ribosomal protein uS12 methylthiotransferase RimO (443 aa).

The region spanning 5–115 (PNIGFISLGC…VMQHVHKYVP (111 aa)) is the MTTase N-terminal domain. [4Fe-4S] cluster contacts are provided by C14, C50, C79, C147, C151, and C154. A Radical SAM core domain is found at 133–374 (LTPKHYAYLK…MQVQQRISVA (242 aa)). The TRAM domain occupies 377-443 (QQKIGKTLAI…ADEYDLWGTY (67 aa)).

Belongs to the methylthiotransferase family. RimO subfamily. [4Fe-4S] cluster serves as cofactor.

The protein resides in the cytoplasm. It catalyses the reaction L-aspartate(89)-[ribosomal protein uS12]-hydrogen + (sulfur carrier)-SH + AH2 + 2 S-adenosyl-L-methionine = 3-methylsulfanyl-L-aspartate(89)-[ribosomal protein uS12]-hydrogen + (sulfur carrier)-H + 5'-deoxyadenosine + L-methionine + A + S-adenosyl-L-homocysteine + 2 H(+). In terms of biological role, catalyzes the methylthiolation of an aspartic acid residue of ribosomal protein uS12. This is Ribosomal protein uS12 methylthiotransferase RimO from Haemophilus ducreyi (strain 35000HP / ATCC 700724).